Reading from the N-terminus, the 481-residue chain is Protein nucleotidyltransferase YdiU (481 aa).

Residues Gly-85, Gly-87, Arg-88, Lys-108, Asp-120, Gly-121, Arg-171, and Arg-178 each contribute to the ATP site. Asp-248 functions as the Proton acceptor in the catalytic mechanism. Residues Asn-249 and Asp-258 each contribute to the Mg(2+) site. Asp-258 lines the ATP pocket. The interval 458–481 (HPGLAEFQQPPTPEQKGLQLSCSS) is disordered.

This sequence belongs to the SELO family. Mg(2+) serves as cofactor. It depends on Mn(2+) as a cofactor.

It catalyses the reaction L-seryl-[protein] + ATP = 3-O-(5'-adenylyl)-L-seryl-[protein] + diphosphate. It carries out the reaction L-threonyl-[protein] + ATP = 3-O-(5'-adenylyl)-L-threonyl-[protein] + diphosphate. The catalysed reaction is L-tyrosyl-[protein] + ATP = O-(5'-adenylyl)-L-tyrosyl-[protein] + diphosphate. The enzyme catalyses L-histidyl-[protein] + UTP = N(tele)-(5'-uridylyl)-L-histidyl-[protein] + diphosphate. It catalyses the reaction L-seryl-[protein] + UTP = O-(5'-uridylyl)-L-seryl-[protein] + diphosphate. It carries out the reaction L-tyrosyl-[protein] + UTP = O-(5'-uridylyl)-L-tyrosyl-[protein] + diphosphate. Its function is as follows. Nucleotidyltransferase involved in the post-translational modification of proteins. It can catalyze the addition of adenosine monophosphate (AMP) or uridine monophosphate (UMP) to a protein, resulting in modifications known as AMPylation and UMPylation. The chain is Protein nucleotidyltransferase YdiU from Hydrogenovibrio crunogenus (strain DSM 25203 / XCL-2) (Thiomicrospira crunogena).